The sequence spans 173 residues: 3-hydroxydecanoyl-[acyl-carrier-protein] dehydratase (173 aa).

The active site involves His71.

Belongs to the thioester dehydratase family. FabA subfamily. Homodimer.

The protein localises to the cytoplasm. It carries out the reaction a (3R)-hydroxyacyl-[ACP] = a (2E)-enoyl-[ACP] + H2O. It catalyses the reaction (3R)-hydroxydecanoyl-[ACP] = (2E)-decenoyl-[ACP] + H2O. The catalysed reaction is (2E)-decenoyl-[ACP] = (3Z)-decenoyl-[ACP]. It participates in lipid metabolism; fatty acid biosynthesis. In terms of biological role, necessary for the introduction of cis unsaturation into fatty acids. Catalyzes the dehydration of (3R)-3-hydroxydecanoyl-ACP to E-(2)-decenoyl-ACP and then its isomerization to Z-(3)-decenoyl-ACP. Can catalyze the dehydratase reaction for beta-hydroxyacyl-ACPs with saturated chain lengths up to 16:0, being most active on intermediate chain length. The polypeptide is 3-hydroxydecanoyl-[acyl-carrier-protein] dehydratase (Bradyrhizobium sp. (strain ORS 278)).